A 340-amino-acid polypeptide reads, in one-letter code: Anthranilate phosphoribosyltransferase (340 aa).

Residues Gly-79, 82-83 (GD), Thr-87, 89-92 (NIST), 107-115 (KHGNRAVTG), and Ser-119 contribute to the 5-phospho-alpha-D-ribose 1-diphosphate site. Position 79 (Gly-79) interacts with anthranilate. Mg(2+) is bound at residue Ser-91. Asn-110 contacts anthranilate. Arg-165 contacts anthranilate. Mg(2+) contacts are provided by Asp-224 and Glu-225.

The protein belongs to the anthranilate phosphoribosyltransferase family. Homodimer. Mg(2+) is required as a cofactor.

It carries out the reaction N-(5-phospho-beta-D-ribosyl)anthranilate + diphosphate = 5-phospho-alpha-D-ribose 1-diphosphate + anthranilate. Its pathway is amino-acid biosynthesis; L-tryptophan biosynthesis; L-tryptophan from chorismate: step 2/5. Catalyzes the transfer of the phosphoribosyl group of 5-phosphorylribose-1-pyrophosphate (PRPP) to anthranilate to yield N-(5'-phosphoribosyl)-anthranilate (PRA). This Syntrophomonas wolfei subsp. wolfei (strain DSM 2245B / Goettingen) protein is Anthranilate phosphoribosyltransferase.